Here is a 264-residue protein sequence, read N- to C-terminus: Glutamate racemase (264 aa).

Residues 9–10 (DS) and 41–42 (YG) contribute to the substrate site. Cys-72 functions as the Proton donor/acceptor in the catalytic mechanism. 73–74 (NT) lines the substrate pocket. Cys-183 functions as the Proton donor/acceptor in the catalytic mechanism. 184–185 (TH) contributes to the substrate binding site.

This sequence belongs to the aspartate/glutamate racemases family.

The catalysed reaction is L-glutamate = D-glutamate. Its pathway is cell wall biogenesis; peptidoglycan biosynthesis. In terms of biological role, provides the (R)-glutamate required for cell wall biosynthesis. The chain is Glutamate racemase from Geobacillus sp. (strain WCH70).